Reading from the N-terminus, the 121-residue chain is uncharacterized protein (121 aa).

The disordered stretch occupies residues 101–121; the sequence is SIEPTATGSPETRDPDPSAYA. The span at 111 to 121 shows a compositional bias: basic and acidic residues; that stretch reads ETRDPDPSAYA.

The protein localises to the mitochondrion. This is an uncharacterized protein from Arabidopsis thaliana (Mouse-ear cress).